The chain runs to 376 residues: Chaperone protein DnaJ (376 aa).

One can recognise a J domain in the interval 5 to 70; the sequence is DYYEVLGVAK…QKRAAYDQYG (66 aa). A CR-type zinc finger spans residues 136 to 214; sequence GYDTQIRVPS…CHGSGKVKET (79 aa). Zn(2+)-binding residues include Cys-149, Cys-152, Cys-166, Cys-169, Cys-188, Cys-191, Cys-202, and Cys-205. 4 CXXCXGXG motif repeats span residues 149-156, 166-173, 188-195, and 202-209; these read CGVCHGSG, CPTCHGQG, CPKCHGTG, and CAHCHGSG.

The protein belongs to the DnaJ family. Homodimer. It depends on Zn(2+) as a cofactor.

It localises to the cytoplasm. In terms of biological role, participates actively in the response to hyperosmotic and heat shock by preventing the aggregation of stress-denatured proteins and by disaggregating proteins, also in an autonomous, DnaK-independent fashion. Unfolded proteins bind initially to DnaJ; upon interaction with the DnaJ-bound protein, DnaK hydrolyzes its bound ATP, resulting in the formation of a stable complex. GrpE releases ADP from DnaK; ATP binding to DnaK triggers the release of the substrate protein, thus completing the reaction cycle. Several rounds of ATP-dependent interactions between DnaJ, DnaK and GrpE are required for fully efficient folding. Also involved, together with DnaK and GrpE, in the DNA replication of plasmids through activation of initiation proteins. In Burkholderia mallei (strain NCTC 10229), this protein is Chaperone protein DnaJ.